The primary structure comprises 710 residues: Polyribonucleotide nucleotidyltransferase (710 aa).

2 residues coordinate Mg(2+): D489 and D495. The 60-residue stretch at 556–615 (PKIDTIKIDVDKIKVVIGKGGETIDKIIAETGVKIDIDDEGNVSIYSSDQAAIDRTKEII) folds into the KH domain. The S1 motif domain maps to 625–693 (GEVYHAKVIR…EKGRVDASMK (69 aa)). The segment at 691 to 710 (SMKALIPRPPKPEKKEEKHD) is disordered. The span at 700–710 (PKPEKKEEKHD) shows a compositional bias: basic and acidic residues.

This sequence belongs to the polyribonucleotide nucleotidyltransferase family. The cofactor is Mg(2+).

It localises to the cytoplasm. The catalysed reaction is RNA(n+1) + phosphate = RNA(n) + a ribonucleoside 5'-diphosphate. Involved in mRNA degradation. Catalyzes the phosphorolysis of single-stranded polyribonucleotides processively in the 3'- to 5'-direction. The sequence is that of Polyribonucleotide nucleotidyltransferase from Streptococcus pyogenes serotype M4 (strain MGAS10750).